Reading from the N-terminus, the 208-residue chain is ATP-dependent Clp protease proteolytic subunit (208 aa).

Residue S107 is the Nucleophile of the active site. H132 is a catalytic residue.

This sequence belongs to the peptidase S14 family. Fourteen ClpP subunits assemble into 2 heptameric rings which stack back to back to give a disk-like structure with a central cavity, resembling the structure of eukaryotic proteasomes.

The protein localises to the cytoplasm. The enzyme catalyses Hydrolysis of proteins to small peptides in the presence of ATP and magnesium. alpha-casein is the usual test substrate. In the absence of ATP, only oligopeptides shorter than five residues are hydrolyzed (such as succinyl-Leu-Tyr-|-NHMec, and Leu-Tyr-Leu-|-Tyr-Trp, in which cleavage of the -Tyr-|-Leu- and -Tyr-|-Trp bonds also occurs).. In terms of biological role, cleaves peptides in various proteins in a process that requires ATP hydrolysis. Has a chymotrypsin-like activity. Plays a major role in the degradation of misfolded proteins. The chain is ATP-dependent Clp protease proteolytic subunit from Methylobacterium radiotolerans (strain ATCC 27329 / DSM 1819 / JCM 2831 / NBRC 15690 / NCIMB 10815 / 0-1).